A 419-amino-acid polypeptide reads, in one-letter code: Capsule polysaccharide modification protein LipB (419 aa).

The protein localises to the cell inner membrane. Its function is as follows. Involved in the phospholipid modification of the capsular polysaccharide, a strong requirement for its translocation to the cell surface. This is Capsule polysaccharide modification protein LipB (lipB) from Neisseria meningitidis serogroup B (strain ATCC BAA-335 / MC58).